Consider the following 193-residue polypeptide: Phosphoheptose isomerase (193 aa).

The SIS domain maps to 37–193; sequence LADSFKAGGK…QLIEKEMVKA (157 aa). 52 to 54 is a binding site for substrate; sequence NGG. Histidine 61 and glutamate 65 together coordinate Zn(2+). Substrate contacts are provided by residues glutamate 65, 93 to 94, 119 to 121, serine 124, and glutamine 172; these read ND and STS. Residues glutamine 172 and histidine 180 each coordinate Zn(2+).

It belongs to the SIS family. GmhA subfamily. Homotetramer. The cofactor is Zn(2+).

It is found in the cytoplasm. It catalyses the reaction 2 D-sedoheptulose 7-phosphate = D-glycero-alpha-D-manno-heptose 7-phosphate + D-glycero-beta-D-manno-heptose 7-phosphate. It participates in carbohydrate biosynthesis; D-glycero-D-manno-heptose 7-phosphate biosynthesis; D-glycero-alpha-D-manno-heptose 7-phosphate and D-glycero-beta-D-manno-heptose 7-phosphate from sedoheptulose 7-phosphate: step 1/1. Its pathway is bacterial outer membrane biogenesis; LPS core biosynthesis. In terms of biological role, catalyzes the isomerization of sedoheptulose 7-phosphate in D-glycero-D-manno-heptose 7-phosphate. The chain is Phosphoheptose isomerase from Yersinia pestis.